The chain runs to 347 residues: N-acetyl-gamma-glutamyl-phosphate reductase (347 aa).

The active site involves cysteine 151.

Belongs to the NAGSA dehydrogenase family. Type 1 subfamily.

The protein resides in the cytoplasm. It carries out the reaction N-acetyl-L-glutamate 5-semialdehyde + phosphate + NADP(+) = N-acetyl-L-glutamyl 5-phosphate + NADPH + H(+). It functions in the pathway amino-acid biosynthesis; L-arginine biosynthesis; N(2)-acetyl-L-ornithine from L-glutamate: step 3/4. Its function is as follows. Catalyzes the NADPH-dependent reduction of N-acetyl-5-glutamyl phosphate to yield N-acetyl-L-glutamate 5-semialdehyde. This Corynebacterium diphtheriae (strain ATCC 700971 / NCTC 13129 / Biotype gravis) protein is N-acetyl-gamma-glutamyl-phosphate reductase.